Here is a 225-residue protein sequence, read N- to C-terminus: Glutathione S-transferase A (225 aa).

The region spanning 3–85 (KDMTLLWGSG…YLESQFKSQG (83 aa)) is the GST N-terminal domain. R18 serves as a coordination point for glutathione. Positions 92–217 (CPAEQAMMYQ…WPPTWLESPQ (126 aa)) constitute a GST C-terminal domain.

This sequence belongs to the GST superfamily. Theta family. As to quaternary structure, homodimer. As to expression, found in all the tissues examined. Highest values found in liver and in intestinal mucosa.

The protein localises to the cytoplasm. It carries out the reaction RX + glutathione = an S-substituted glutathione + a halide anion + H(+). In terms of biological role, conjugation of reduced glutathione to a wide number of exogenous and endogenous hydrophobic electrophiles. The chain is Glutathione S-transferase A from Pleuronectes platessa (European plaice).